Reading from the N-terminus, the 346-residue chain is Biotin synthase (346 aa).

One can recognise a Radical SAM core domain in the interval glutamine 38–threonine 256. [4Fe-4S] cluster-binding residues include cysteine 53, cysteine 57, and cysteine 60. The [2Fe-2S] cluster site is built by cysteine 97, cysteine 128, cysteine 188, and arginine 260.

Belongs to the radical SAM superfamily. Biotin synthase family. In terms of assembly, homodimer. Requires [4Fe-4S] cluster as cofactor. [2Fe-2S] cluster is required as a cofactor.

It catalyses the reaction (4R,5S)-dethiobiotin + (sulfur carrier)-SH + 2 reduced [2Fe-2S]-[ferredoxin] + 2 S-adenosyl-L-methionine = (sulfur carrier)-H + biotin + 2 5'-deoxyadenosine + 2 L-methionine + 2 oxidized [2Fe-2S]-[ferredoxin]. It participates in cofactor biosynthesis; biotin biosynthesis; biotin from 7,8-diaminononanoate: step 2/2. Functionally, catalyzes the conversion of dethiobiotin (DTB) to biotin by the insertion of a sulfur atom into dethiobiotin via a radical-based mechanism. This chain is Biotin synthase, found in Salmonella choleraesuis (strain SC-B67).